We begin with the raw amino-acid sequence, 300 residues long: U6 snRNA methylphosphate capping enzyme Amus (300 aa).

Over residues 1–12 the composition is skewed to polar residues; it reads MDLENNNNTPLT. 2 disordered regions span residues 1–21 and 34–68; these read MDLE…KCAK and VESK…GKPM. Positions 34–44 are enriched in basic and acidic residues; sequence VESKRLKKEES. A Bin3-type SAM domain is found at 95-300; sequence DIRLDVLGTQ…KRPIQIFTKS (206 aa). The S-adenosyl-L-methionine site is built by Asn-119 and Asp-140.

This sequence belongs to the methyltransferase superfamily.

The protein resides in the nucleus. Probable S-adenosyl-L-methionine-dependent methyltransferase that binds and stabilizes U6 snRNA, probably by adding a methylphosphate cap at its 5'-end. Required for U6 stability, but not stability of 7SK snRNAs, other miRNAs or tRNAs. U6 stabilization is required for efficient pre-mRNA splicing. Essential for organismal and germline development. The protein is U6 snRNA methylphosphate capping enzyme Amus of Drosophila melanogaster (Fruit fly).